The chain runs to 377 residues: Alanine racemase (377 aa).

Lys-37 acts as the Proton acceptor; specific for D-alanine in catalysis. The residue at position 37 (Lys-37) is an N6-(pyridoxal phosphate)lysine. Arg-135 lines the substrate pocket. Tyr-271 serves as the catalytic Proton acceptor; specific for L-alanine. Met-319 lines the substrate pocket.

This sequence belongs to the alanine racemase family. It depends on pyridoxal 5'-phosphate as a cofactor.

It catalyses the reaction L-alanine = D-alanine. The protein operates within amino-acid biosynthesis; D-alanine biosynthesis; D-alanine from L-alanine: step 1/1. Catalyzes the interconversion of L-alanine and D-alanine. May also act on other amino acids. This chain is Alanine racemase (alr), found in Helicobacter pylori (strain G27).